Here is a 620-residue protein sequence, read N- to C-terminus: DNA mismatch repair protein MutL (620 aa).

The tract at residues 353–375 (SRANGANDFTGRPFSGTERPRGG) is disordered.

The protein belongs to the DNA mismatch repair MutL/HexB family.

Its function is as follows. This protein is involved in the repair of mismatches in DNA. It is required for dam-dependent methyl-directed DNA mismatch repair. May act as a 'molecular matchmaker', a protein that promotes the formation of a stable complex between two or more DNA-binding proteins in an ATP-dependent manner without itself being part of a final effector complex. The sequence is that of DNA mismatch repair protein MutL from Chelativorans sp. (strain BNC1).